Consider the following 378-residue polypeptide: UPF0754 membrane protein SH1116 (378 aa).

A run of 2 helical transmembrane segments spans residues 4 to 24 (FLVILFMVVVGAVIGGVTNVI) and 358 to 378 (SLGFILGGIIGFFQGIVAIFV).

The protein belongs to the UPF0754 family.

It is found in the cell membrane. The chain is UPF0754 membrane protein SH1116 from Staphylococcus haemolyticus (strain JCSC1435).